The following is a 590-amino-acid chain: Aspartate--tRNA(Asp/Asn) ligase (590 aa).

Glu175 contributes to the L-aspartate binding site. Positions 199–202 (QQYK) are aspartate. Arg221 and His450 together coordinate L-aspartate. Residue 221–223 (RDE) participates in ATP binding. ATP is bound at residue Glu484. Arg491 serves as a coordination point for L-aspartate. 536 to 539 (GVDR) is an ATP binding site.

This sequence belongs to the class-II aminoacyl-tRNA synthetase family. Type 1 subfamily. Homodimer.

The protein localises to the cytoplasm. The enzyme catalyses tRNA(Asx) + L-aspartate + ATP = L-aspartyl-tRNA(Asx) + AMP + diphosphate. In terms of biological role, aspartyl-tRNA synthetase with relaxed tRNA specificity since it is able to aspartylate not only its cognate tRNA(Asp) but also tRNA(Asn). Reaction proceeds in two steps: L-aspartate is first activated by ATP to form Asp-AMP and then transferred to the acceptor end of tRNA(Asp/Asn). This Nitrobacter hamburgensis (strain DSM 10229 / NCIMB 13809 / X14) protein is Aspartate--tRNA(Asp/Asn) ligase.